We begin with the raw amino-acid sequence, 141 residues long: MAKKVIKVVKLQIPAGKANPAPPVGPALGQAGVNIMAFCKEFNARTADQAGLIIPVEITVFEDRSFTFITKTPPAAVLLKKAAGIESGSGEPNRNKVATIKRDKVREIAELKMPDLNAASIEAAMRMIEGTARSMGIVIED.

This sequence belongs to the universal ribosomal protein uL11 family. As to quaternary structure, part of the ribosomal stalk of the 50S ribosomal subunit. Interacts with L10 and the large rRNA to form the base of the stalk. L10 forms an elongated spine to which L12 dimers bind in a sequential fashion forming a multimeric L10(L12)X complex. One or more lysine residues are methylated.

In terms of biological role, forms part of the ribosomal stalk which helps the ribosome interact with GTP-bound translation factors. The polypeptide is Large ribosomal subunit protein uL11 (Geobacillus kaustophilus (strain HTA426)).